The chain runs to 278 residues: MQAVAPQPGDFPLPLRSLLDAGVHFGHQTKRWNPKMRPFIYGARNGIHIIDLDQTTRLFKRAYDFLTDAVGRGGHVLFVGTKRQAQDIVQEEARRAGMYFVTNRWLGGTLTNFRTIKQGLDRLRTLERMKEDGTYEQLLKKEVVRLEKERERLEKYLGGLKGMGGLPAAIFVIDPHQESIAISEARKLNVPVVAITDTNCDPDLVDFVIPGNDDAIRSIRLITARVADACVEGAQRRKDHGEGGQQAAGGGRGQRDEINVYQGGRGGRGGGPRQQQAS.

Residues 235 to 278 form a disordered region; sequence QRRKDHGEGGQQAAGGGRGQRDEINVYQGGRGGRGGGPRQQQAS. Composition is skewed to gly residues over residues 243–252 and 263–272; these read GGQQAAGGGR and GGRGGRGGGP.

It belongs to the universal ribosomal protein uS2 family.

The sequence is that of Small ribosomal subunit protein uS2 from Sorangium cellulosum (strain So ce56) (Polyangium cellulosum (strain So ce56)).